The chain runs to 96 residues: Transcription and mRNA export factor SUS1 (96 aa).

Lys68 participates in a covalent cross-link: Glycyl lysine isopeptide (Lys-Gly) (interchain with G-Cter in ubiquitin).

The protein belongs to the ENY2 family. In terms of assembly, component of the nuclear pore complex (NPC)-associated TREX-2 complex (transcription and export complex 2), composed of at least SUS1, SAC3, THP1, SEM1, and CDC31. TREX-2 contains 2 SUS1 chains. The TREX-2 complex interacts with the nucleoporin NUP1. Component of the 1.8 MDa SAGA transcription coactivator-HAT complex. SAGA is built of 5 distinct domains with specialized functions. Within the SAGA complex, SUS1, SGF11, SGF73 and UBP8 form an additional subcomplex of SAGA called the DUB module (deubiquitination module). Interacts directly with THP1, SAC3, SGF11, and with the RNA polymerase II.

Its subcellular location is the nucleus. It localises to the nucleoplasm. The protein localises to the cytoplasm. It is found in the P-body. Its function is as follows. Involved in mRNA export coupled transcription activation by association with both the TREX-2 and the SAGA complexes. At the promoters, SAGA is required for recruitment of the basal transcription machinery. It influences RNA polymerase II transcriptional activity through different activities such as TBP interaction and promoter selectivity, interaction with transcription activators, and chromatin modification through histone acetylation and deubiquitination. Within the SAGA complex, participates in a subcomplex required for deubiquitination of H2B and for the maintenance of steady-state H3 methylation levels. The TREX-2 complex functions in docking export-competent ribonucleoprotein particles (mRNPs) to the nuclear entrance of the nuclear pore complex (nuclear basket). TREX-2 participates in mRNA export and accurate chromatin positioning in the nucleus by tethering genes to the nuclear periphery. May also be involved in cytoplasmic mRNA decay by interaction with components of P-bodies. This Saccharomyces cerevisiae (strain YJM789) (Baker's yeast) protein is Transcription and mRNA export factor SUS1.